A 523-amino-acid polypeptide reads, in one-letter code: Putative oxidoreductase TDA3 (523 aa).

The span at 157–172 (NSSLSSSGSSLKNDSA) shows a compositional bias: low complexity. The segment at 157 to 189 (NSSLSSSGSSLKNDSASNEEEGSDIHVSSSVPS) is disordered. Phosphoserine occurs at positions 189, 204, and 306.

This sequence belongs to the TDA3 family. In terms of assembly, interacts with BTN2.

Its subcellular location is the cytoplasm. The protein resides in the late endosome. Functionally, putative oxidoreductase that negatively regulates the retrieval of cargo from late endosomes to the Golgi. Regulates YIF1 and KEX2 localization. Required for fast DNA replication. This Saccharomyces cerevisiae (strain ATCC 204508 / S288c) (Baker's yeast) protein is Putative oxidoreductase TDA3 (TDA3).